We begin with the raw amino-acid sequence, 70 residues long: ATP synthase subunit c (70 aa).

The next 2 membrane-spanning stretches (helical) occupy residues 4–24 (IAAAIAIGLSALGAGIGNGLI) and 45–65 (IMFIGVGLVEALPIIGVVIAF).

Belongs to the ATPase C chain family. As to quaternary structure, F-type ATPases have 2 components, F(1) - the catalytic core - and F(0) - the membrane proton channel. F(1) has five subunits: alpha(3), beta(3), gamma(1), delta(1), epsilon(1). F(0) has three main subunits: a(1), b(2) and c(10-14). The alpha and beta chains form an alternating ring which encloses part of the gamma chain. F(1) is attached to F(0) by a central stalk formed by the gamma and epsilon chains, while a peripheral stalk is formed by the delta and b chains.

Its subcellular location is the cell membrane. Functionally, f(1)F(0) ATP synthase produces ATP from ADP in the presence of a proton or sodium gradient. F-type ATPases consist of two structural domains, F(1) containing the extramembraneous catalytic core and F(0) containing the membrane proton channel, linked together by a central stalk and a peripheral stalk. During catalysis, ATP synthesis in the catalytic domain of F(1) is coupled via a rotary mechanism of the central stalk subunits to proton translocation. In terms of biological role, key component of the F(0) channel; it plays a direct role in translocation across the membrane. A homomeric c-ring of between 10-14 subunits forms the central stalk rotor element with the F(1) delta and epsilon subunits. In Staphylococcus aureus (strain Mu3 / ATCC 700698), this protein is ATP synthase subunit c.